Consider the following 290-residue polypeptide: Ubiquinone biosynthesis protein COQ4, mitochondrial (290 aa).

A mitochondrion-targeting transit peptide spans 1-32 (MAKRVCVGDLRKLAGSVSTPSRCILPPHARCF). Positions 168, 169, 172, and 184 each coordinate Zn(2+). The interval 260 to 290 (KPPDLREMRKAEREAQKKDKEAKETMTRAAV) is disordered.

It belongs to the COQ4 family. In terms of assembly, component of a multi-subunit COQ enzyme complex, composed of at least COQ3, COQ4, COQ5, COQ6, COQ7 and COQ9. It depends on Zn(2+) as a cofactor.

It is found in the mitochondrion inner membrane. It carries out the reaction a 4-hydroxy-3-methoxy-5-(all-trans-polyprenyl)benzoate + H(+) = a 2-methoxy-6-(all-trans-polyprenyl)phenol + CO2. Its pathway is cofactor biosynthesis; ubiquinone biosynthesis. In terms of biological role, lyase that catalyzes the C1-decarboxylation of 4-hydroxy-3-methoxy-5-(all-trans-polyprenyl)benzoic acid into 2-methoxy-6-(all-trans-polyprenyl)phenol during ubiquinone biosynthesis. This chain is Ubiquinone biosynthesis protein COQ4, mitochondrial, found in Phaeosphaeria nodorum (strain SN15 / ATCC MYA-4574 / FGSC 10173) (Glume blotch fungus).